The primary structure comprises 95 residues: Co-chaperonin GroES (95 aa).

This sequence belongs to the GroES chaperonin family. As to quaternary structure, heptamer of 7 subunits arranged in a ring. Interacts with the chaperonin GroEL.

Its subcellular location is the cytoplasm. Its function is as follows. Together with the chaperonin GroEL, plays an essential role in assisting protein folding. The GroEL-GroES system forms a nano-cage that allows encapsulation of the non-native substrate proteins and provides a physical environment optimized to promote and accelerate protein folding. GroES binds to the apical surface of the GroEL ring, thereby capping the opening of the GroEL channel. The protein is Co-chaperonin GroES of Streptococcus thermophilus (strain ATCC BAA-491 / LMD-9).